We begin with the raw amino-acid sequence, 394 residues long: Phosphopentomutase (394 aa).

Residues D13, D286, H291, D327, H328, and H339 each contribute to the Mn(2+) site.

It belongs to the phosphopentomutase family. The cofactor is Mn(2+).

It is found in the cytoplasm. It carries out the reaction 2-deoxy-alpha-D-ribose 1-phosphate = 2-deoxy-D-ribose 5-phosphate. It catalyses the reaction alpha-D-ribose 1-phosphate = D-ribose 5-phosphate. The protein operates within carbohydrate degradation; 2-deoxy-D-ribose 1-phosphate degradation; D-glyceraldehyde 3-phosphate and acetaldehyde from 2-deoxy-alpha-D-ribose 1-phosphate: step 1/2. Isomerase that catalyzes the conversion of deoxy-ribose 1-phosphate (dRib-1-P) and ribose 1-phosphate (Rib-1-P) to deoxy-ribose 5-phosphate (dRib-5-P) and ribose 5-phosphate (Rib-5-P), respectively. The protein is Phosphopentomutase of Bacillus anthracis (strain A0248).